The sequence spans 236 residues: UPF0257 lipoprotein YnfC (236 aa).

The first 16 residues, 1 to 16 (MKYKLLPCLLAIFLTG), serve as a signal peptide directing secretion. Residue Cys-17 is the site of N-palmitoyl cysteine attachment. Cys-17 carries S-diacylglycerol cysteine lipidation.

It belongs to the UPF0257 family.

The protein localises to the cell membrane. This Escherichia coli O17:K52:H18 (strain UMN026 / ExPEC) protein is UPF0257 lipoprotein YnfC.